Reading from the N-terminus, the 88-residue chain is Beta-insect excitatory toxin 2 (88 aa).

A signal peptide spans methionine 1–glycine 18. The LCN-type CS-alpha/beta domain occupies lysine 20–aspartate 83. 4 disulfides stabilise this stretch: cysteine 34-cysteine 55, cysteine 40-cysteine 60, cysteine 44-cysteine 62, and cysteine 56-cysteine 82.

Belongs to the long (4 C-C) scorpion toxin superfamily. Sodium channel inhibitor family. Beta subfamily. As to expression, expressed by the venom gland.

The protein localises to the secreted. In terms of biological role, excitatory insect beta-toxins induce a spastic paralysis. They bind voltage-independently at site-4 of sodium channels (Nav) and shift the voltage of activation toward more negative potentials thereby affecting sodium channel activation and promoting spontaneous and repetitive firing. This toxin is active only on insects. The polypeptide is Beta-insect excitatory toxin 2 (Androctonus australis (Sahara scorpion)).